The sequence spans 573 residues: Urease subunit alpha (573 aa).

Residues 136-573 (GAIDCHVHLI…LPMAQRYFLF (438 aa)) enclose the Urease domain. 3 residues coordinate Ni(2+): His-141, His-143, and Lys-224. Lys-224 bears the N6-carboxylysine mark. His-226 is a substrate binding site. Residues His-253 and His-279 each coordinate Ni(2+). Catalysis depends on His-327, which acts as the Proton donor. Asp-367 is a Ni(2+) binding site.

The protein belongs to the metallo-dependent hydrolases superfamily. Urease alpha subunit family. In terms of assembly, heterotrimer of UreA (gamma), UreB (beta) and UreC (alpha) subunits. Three heterotrimers associate to form the active enzyme. Ni cation serves as cofactor. Post-translationally, carboxylation allows a single lysine to coordinate two nickel ions.

The protein resides in the cytoplasm. It carries out the reaction urea + 2 H2O + H(+) = hydrogencarbonate + 2 NH4(+). The protein operates within nitrogen metabolism; urea degradation; CO(2) and NH(3) from urea (urease route): step 1/1. This is Urease subunit alpha from Mycolicibacterium vanbaalenii (strain DSM 7251 / JCM 13017 / BCRC 16820 / KCTC 9966 / NRRL B-24157 / PYR-1) (Mycobacterium vanbaalenii).